Reading from the N-terminus, the 429-residue chain is DNA polymerase delta small subunit (429 aa).

It belongs to the DNA polymerase delta/II small subunit family. Heterodimer with subunits of 125 kDa and 50 kDa.

It localises to the nucleus. It carries out the reaction DNA(n) + a 2'-deoxyribonucleoside 5'-triphosphate = DNA(n+1) + diphosphate. Its function is as follows. The function of the small subunit is not yet clear. The protein is DNA polymerase delta small subunit (POLD2) of Oryza sativa subsp. japonica (Rice).